We begin with the raw amino-acid sequence, 253 residues long: MTRVDLNADMGESFGPWKMGDDDSLLKIITSANIACGFHAGDPDVMAKTMALAAENGVGIGAHPGFPDLQGFGRRNMKVPHDSLRNLVRYQLGAALGMARAVGTQVRHLKLHGALANMCSVDQDMARACYQGALDVDPDIIIMVLAVTKQEQAVRELGCKWVGEIFADRAYNDDGTLVDRALPGAVIHDPDLAGPRMLKMVRAGAIITESGKHLETSVDTICLHGDGPTAVQIARSVRACLEEGGVSVTAFER.

The protein belongs to the LamB/PxpA family. Forms a complex composed of PxpA, PxpB and PxpC.

It catalyses the reaction 5-oxo-L-proline + ATP + 2 H2O = L-glutamate + ADP + phosphate + H(+). Functionally, catalyzes the cleavage of 5-oxoproline to form L-glutamate coupled to the hydrolysis of ATP to ADP and inorganic phosphate. This chain is 5-oxoprolinase subunit A, found in Ruegeria pomeroyi (strain ATCC 700808 / DSM 15171 / DSS-3) (Silicibacter pomeroyi).